A 338-amino-acid polypeptide reads, in one-letter code: Heat-inducible transcription repressor HrcA (338 aa).

Belongs to the HrcA family.

Negative regulator of class I heat shock genes (grpE-dnaK-dnaJ and groELS operons). Prevents heat-shock induction of these operons. The polypeptide is Heat-inducible transcription repressor HrcA (Thermotoga maritima (strain ATCC 43589 / DSM 3109 / JCM 10099 / NBRC 100826 / MSB8)).